Reading from the N-terminus, the 327-residue chain is Phenylalanine--tRNA ligase alpha subunit (327 aa).

Residue Glu-252 coordinates Mg(2+).

The protein belongs to the class-II aminoacyl-tRNA synthetase family. Phe-tRNA synthetase alpha subunit type 1 subfamily. Tetramer of two alpha and two beta subunits. Requires Mg(2+) as cofactor.

It localises to the cytoplasm. The enzyme catalyses tRNA(Phe) + L-phenylalanine + ATP = L-phenylalanyl-tRNA(Phe) + AMP + diphosphate + H(+). This Photobacterium profundum (strain SS9) protein is Phenylalanine--tRNA ligase alpha subunit.